The primary structure comprises 200 residues: Mediator of RNA polymerase II transcription subunit 29 (200 aa).

Low complexity-rich tracts occupy residues 1–20 (MAAS…VSGP) and 36–48 (AQLV…GLLQ). Residues 1-48 (MAASQQQASATTSTASVSGPGSAGGSGPQQQPQPPAQLVGPAQSGLLQ) form a disordered region. An N-acetylalanine modification is found at Ala-2.

It belongs to the Mediator complex subunit 29 family. Component of the TRAP/SMCC mediator complex. Interacts with MED20/TRFP. Associates with the MED18-MED20 heteromer.

It is found in the nucleus. Its function is as follows. Component of the mediator complex, a complex that can either repress or activate transcription. Mediator complexes are essential for basal and regulated expression of nearly all RNA polymerase II-dependent genes. They may act as a bridge, conveying regulatory information from enhancers and other control elements to the promoter. The polypeptide is Mediator of RNA polymerase II transcription subunit 29 (MED29) (Bos taurus (Bovine)).